Here is a 596-residue protein sequence, read N- to C-terminus: Nuclear receptor subfamily 2 group C member 2 (596 aa).

Ser-19 is modified (phosphoserine; by MAPK). Phosphoserine is present on Ser-46. A phosphoserine; by MAPK mark is found at Ser-55 and Ser-68. Ser-98 is modified (phosphoserine). The nuclear receptor DNA-binding region spans 114–189 (VEYCVVCGDK…MGMKMESVQS (76 aa)). 2 NR C4-type zinc fingers span residues 117–137 (CVVC…CEGC) and 153–177 (CRSS…LKKC). Lys-192 is covalently cross-linked (Glycyl lysine isopeptide (Lys-Gly) (interchain with G-Cter in SUMO2)). The residue at position 219 (Ser-219) is a Phosphoserine. Lys-231 is subject to N6-acetyllysine. Residues 341-583 (GSIHVISRDQ…SIIPYILKME (243 aa)) enclose the NR LBD domain.

This sequence belongs to the nuclear hormone receptor family. NR2 subfamily. Homodimer; can bind DNA as homodimer. Heterodimer; binds DNA as a heterodimer with NR2C1 required for chromatin remodeling and for binding to promoter regions such as globin DR1 repeats. Interacts with NR2C2AP; the interaction represses selective NR2C2-mediated transcriptional activity. Interacts with PCAF; the interaction preferentially occurs on the non-phosphorylated form and induces NR2C2-mediated transactivation activity and does not require the ligand-binding domain. Interacts (MAPK-mediated phosphorylated form) with NRIP1; the interaction promotes repression of NR2C2-mediated activity. Interacts with NLRP10. Interacts (via ligand-binding region) with transcriptional corepressor JAZF1; the interaction promotes NR2C2-mediated transcriptional repression. Post-translationally, phosphorylation on Ser-19 and Ser-68 is an important regulator of NR2C2-mediated transcriptional activity. Phosphorylation on these residues recruits the corepressor, NRIP1, leading to transcripional repression, whereas the non-phosphorylated form preferentially recruits the coactivator, PCAF. Expressed in hepatocytes. Also expressed in granule cells of the hippocampus and the cerebellum.

It localises to the nucleus. In terms of biological role, orphan nuclear receptor that can act as a repressor or activator of transcription. An important repressor of nuclear receptor signaling pathways such as retinoic acid receptor, retinoid X, vitamin D3 receptor, thyroid hormone receptor and estrogen receptor pathways. May regulate gene expression during the late phase of spermatogenesis. Activates transcriptional activity of LHCG and is antagonist of PPARA-mediated transactivation. Together with NR2C1, forms the core of the DRED (direct repeat erythroid-definitive) complex that represses embryonic and fetal globin transcription including that of GATA1. Binds to hormone response elements (HREs) consisting of two 5'-AGGTCA-3' half site direct repeat consensus sequences. Plays a fundamental role in early embryonic development and embryonic stem cells. Required for normal spermatogenesis and cerebellum development. Appears to be important for neurodevelopmentally regulated behavior. The sequence is that of Nuclear receptor subfamily 2 group C member 2 (Nr2c2) from Rattus norvegicus (Rat).